Here is a 194-residue protein sequence, read N- to C-terminus: Chorion class B protein ERB4 (194 aa).

The first 20 residues, 1–20 (MSSNVIVLCVSALFIQCAVS), serve as a signal peptide directing secretion. Residues 22 to 72 (CVGRIGSLRGGPFDGWGYDGLGYDGFGIGGWNGRGCGGLGDDIAAAAALGA) are left arm. The central domain stretch occupies residues 73–128 (SHGGTLAVVSTSAAPTGLGIASENVYEGSVGVCGNLPFLGTADVAGEFPTAGLGGI). The tract at residues 129–194 (DYTCGDGAVG…RGCGCGANYY (66 aa)) is right arm (Gly-rich tandem repeats).

It belongs to the chorion protein family.

In terms of biological role, this protein is one of many from the eggshell of the silk moth. This Bombyx mori (Silk moth) protein is Chorion class B protein ERB4.